The chain runs to 144 residues: Protein cornichon (144 aa).

Over 1–10 the chain is Lumenal; that stretch reads MAFNFTAFTY. Residues 1–57 form an interaction with grk region; that stretch reads MAFNFTAFTYIVALIGDAFLIFFAIFHVIAFDELKTDYKNPIDQCNSLNPLVLPEYL. Residues 11 to 31 form a helical membrane-spanning segment; sequence IVALIGDAFLIFFAIFHVIAF. Residues 32–56 lie on the Cytoplasmic side of the membrane; that stretch reads DELKTDYKNPIDQCNSLNPLVLPEY. A helical membrane pass occupies residues 57–77; that stretch reads LLHIFLNLLFLFCGEWFSLCI. The Lumenal portion of the chain corresponds to 78–122; it reads NIPLIAYHIWRYKNRPVMSGPGLYDPTTVLKTDTLYRNMREGWIK. Residues 123–143 form a helical membrane-spanning segment; sequence LAVYLISFFYYIYGMVYSLIS. A topological domain (cytoplasmic) is located at residue Thr144.

This sequence belongs to the cornichon family. As to quaternary structure, interacts with grk. In terms of tissue distribution, expressed in male and female somatic tissues.

It localises to the endoplasmic reticulum membrane. Its function is as follows. Acts as a cargo receptor necessary for the transportation of gurken (grk) to a transitional endoplasmic reticulum (tER) site and promotes its incorporation into coat protein complex II (COPII) vesicles. Associated with gurken, produces a signal received by torpedo resulting in a signaling pathway that first establishes posterior follicle cell fates and normal localization of the anterior and posterior determinants, later they act in a signaling event inducing dorsal follicle cell fates and regulating the dorsal-ventral pattern of egg and embryo. The chain is Protein cornichon (cni) from Drosophila melanogaster (Fruit fly).